The sequence spans 514 residues: Tryptophan decarboxylase 1 (514 aa).

Phe-104 is a serotonin binding site. 2 residues coordinate pyridoxal 5'-phosphate: Thr-175 and Ser-176. Residue His-214 participates in serotonin binding. Thr-273 provides a ligand contact to pyridoxal 5'-phosphate. An N6-(pyridoxal phosphate)lysine modification is found at Lys-330. Tyr-359 (proton donor) is an active-site residue. Val-380 and Gly-381 together coordinate pyridoxal 5'-phosphate.

Belongs to the group II decarboxylase family. Forms homodimers. The cofactor is pyridoxal 5'-phosphate.

It catalyses the reaction L-tryptophan + H(+) = tryptamine + CO2. The catalysed reaction is 5-hydroxy-L-tryptophan + H(+) = serotonin + CO2. In terms of biological role, involved in serotonin biosynthesis. Catalyzes the decarboxylation of L-tryptophan to produce tryptamine, which is converted to serotonin by tryptamine 5-hydroxylase. May play a major role in serotonin biosynthesis during senescence. Accumulation of serotonin attenuates leaf senescence. Catalyzes the decarboxylation of 5-hydroxy-L-tryptophan to produce serotonin. The sequence is that of Tryptophan decarboxylase 1 from Oryza sativa subsp. japonica (Rice).